A 382-amino-acid polypeptide reads, in one-letter code: UDP-N-acetylglucosamine--N-acetylmuramyl-(pentapeptide) pyrophosphoryl-undecaprenol N-acetylglucosamine transferase (382 aa).

UDP-N-acetyl-alpha-D-glucosamine is bound by residues 11-13 (TGG), N124, R164, S192, and Q314.

The protein belongs to the glycosyltransferase 28 family. MurG subfamily.

It localises to the cell membrane. The enzyme catalyses di-trans,octa-cis-undecaprenyl diphospho-N-acetyl-alpha-D-muramoyl-L-alanyl-D-glutamyl-meso-2,6-diaminopimeloyl-D-alanyl-D-alanine + UDP-N-acetyl-alpha-D-glucosamine = di-trans,octa-cis-undecaprenyl diphospho-[N-acetyl-alpha-D-glucosaminyl-(1-&gt;4)]-N-acetyl-alpha-D-muramoyl-L-alanyl-D-glutamyl-meso-2,6-diaminopimeloyl-D-alanyl-D-alanine + UDP + H(+). It functions in the pathway cell wall biogenesis; peptidoglycan biosynthesis. In terms of biological role, cell wall formation. Catalyzes the transfer of a GlcNAc subunit on undecaprenyl-pyrophosphoryl-MurNAc-pentapeptide (lipid intermediate I) to form undecaprenyl-pyrophosphoryl-MurNAc-(pentapeptide)GlcNAc (lipid intermediate II). This is UDP-N-acetylglucosamine--N-acetylmuramyl-(pentapeptide) pyrophosphoryl-undecaprenol N-acetylglucosamine transferase from Deinococcus deserti (strain DSM 17065 / CIP 109153 / LMG 22923 / VCD115).